A 95-amino-acid polypeptide reads, in one-letter code: MQFTTILSIGITVFGLLNTGAFAAPQPVPEAYAVSDPEAHPDDFAGMDANQLQKRGFGCNGPWDEDDMQCHNHCKSIKGYKGGYCAKGGFVCKCY.

A signal peptide spans methionine 1 to alanine 23. Residues alanine 24–arginine 55 constitute a propeptide that is removed on maturation. Residues phenylalanine 57, glycine 58, and cysteine 59 each coordinate beta-D-GlcNAc-(1-&gt;4)-Mur2Ac(oyl-L-Ala-gamma-D-Glu-L-Lys-D-Ala-D-Ala)-di-trans,octa-cis-undecaprenyl diphosphate. 3 cysteine pairs are disulfide-bonded: cysteine 59/cysteine 85, cysteine 70/cysteine 92, and cysteine 74/cysteine 94. A binds to membrane interface region spans residues glycine 61–aspartate 64. Beta-D-GlcNAc-(1-&gt;4)-Mur2Ac(oyl-L-Ala-gamma-D-Glu-L-Lys-D-Ala-D-Ala)-di-trans,octa-cis-undecaprenyl diphosphate contacts are provided by aspartate 67, histidine 73, tyrosine 84, alanine 86, glycine 88, cysteine 92, and lysine 93. The interval alanine 86 to cysteine 92 is binds to membrane interface.

This sequence belongs to the invertebrate defensin family. Type 2 subfamily.

It localises to the secreted. Its subcellular location is the host cell membrane. In terms of biological role, antimicrobial peptide that potently acts against several species of Gram-positive bacteria. It selectively inhibits peptidoglycan biosynthesis through complex formation with the cell wall precursor lipid II (1:1 molar ratio) thus inhibiting cell wall synthesis. It does not disrupt cell membranes. Is especially active against numerous clinical isolates of S.pneumoniae, including all 90 different serotypes and isolates resistant to clinically used antibiotics. In vitro, shows considerable selectivity for bacteria over mammalian cells. The peptide synthesized in D-amino acids does not show antibacterial activity. In vitro, acts on voltage-gated potassium channels by moderately inhibiting mammalian Kv1.3/KCNA3 (IC(50)=2.8 uM), and moderately inhibiting others potassium channels. The protein is Fungal defensin plectasin (DEF) of Pseudoplectania nigrella (Ebony cup).